The primary structure comprises 256 residues: ATP synthase peripheral stalk subunit b, mitochondrial (256 aa).

The N-terminal 42 residues, 1-42, are a transit peptide targeting the mitochondrion; sequence MLSRVVLSAAATAAPCLKNAAVLGPGVLQATRVFHTGQPRLA. Lysine 131 is modified (N6-succinyllysine). Residues lysine 139, lysine 154, lysine 162, lysine 221, lysine 233, and lysine 244 each carry the N6-acetyllysine modification.

It belongs to the eukaryotic ATPase B chain family. As to quaternary structure, component of the ATP synthase complex composed at least of ATP5F1A/subunit alpha, ATP5F1B/subunit beta, ATP5MC1/subunit c (homooctomer), MT-ATP6/subunit a, MT-ATP8/subunit 8, ATP5ME/subunit e, ATP5MF/subunit f, ATP5MG/subunit g, ATP5MK/subunit k, ATP5MJ/subunit j, ATP5F1C/subunit gamma, ATP5F1D/subunit delta, ATP5F1E/subunit epsilon, ATP5PF/subunit F6, ATP5PB/subunit b, ATP5PD/subunit d, ATP5PO/subunit OSCP. ATP synthase complex consists of a soluble F(1) head domain (subunits alpha(3) and beta(3)) - the catalytic core - and a membrane F(0) domain - the membrane proton channel (subunits c, a, 8, e, f, g, k and j). These two domains are linked by a central stalk (subunits gamma, delta, and epsilon) rotating inside the F1 region and a stationary peripheral stalk (subunits F6, b, d, and OSCP).

The protein localises to the mitochondrion. It localises to the mitochondrion inner membrane. In terms of biological role, subunit b, of the mitochondrial membrane ATP synthase complex (F(1)F(0) ATP synthase or Complex V) that produces ATP from ADP in the presence of a proton gradient across the membrane which is generated by electron transport complexes of the respiratory chain. ATP synthase complex consist of a soluble F(1) head domain - the catalytic core - and a membrane F(1) domain - the membrane proton channel. These two domains are linked by a central stalk rotating inside the F(1) region and a stationary peripheral stalk. During catalysis, ATP synthesis in the catalytic domain of F(1) is coupled via a rotary mechanism of the central stalk subunits to proton translocation. In vivo, can only synthesize ATP although its ATP hydrolase activity can be activated artificially in vitro. Part of the complex F(0) domain. Part of the complex F(0) domain and the peripheric stalk, which acts as a stator to hold the catalytic alpha(3)beta(3) subcomplex and subunit a/ATP6 static relative to the rotary elements. The protein is ATP synthase peripheral stalk subunit b, mitochondrial of Rattus norvegicus (Rat).